A 380-amino-acid polypeptide reads, in one-letter code: Nucleoporin Nup43 (380 aa).

Met-1 carries the N-acetylmethionine modification. WD repeat units lie at residues 8–57 (FVSQ…NLDS), 72–110 (RHHG…QTLS), 127–166 (PSYS…AVRT), 170–208 (ADSS…NEPS), 215–255 (GDRV…MPVS), and 259–299 (AHEA…PEKS).

In terms of assembly, component of the Nup107-160 subcomplex of the nuclear pore complex (NPC). The Nup107-160 subcomplex includes NUP160, NUP133, NUP107, NUP98, NUP85, NUP43, NUP37, SEH1 and SEC13.

It is found in the chromosome. The protein resides in the centromere. Its subcellular location is the kinetochore. The protein localises to the nucleus. It localises to the nuclear pore complex. In terms of biological role, component of the Nup107-160 subcomplex of the nuclear pore complex (NPC). The Nup107-160 subcomplex is required for the assembly of a functional NPC. The Nup107-160 subcomplex is also required for normal kinetochore microtubule attachment, mitotic progression and chromosome segregation. The chain is Nucleoporin Nup43 (NUP43) from Homo sapiens (Human).